The following is a 308-amino-acid chain: Acetylglutamate kinase (308 aa).

Residues 64 to 65, Arg-86, and Asn-192 each bind substrate; that span reads GG.

It belongs to the acetylglutamate kinase family. ArgB subfamily.

It is found in the cytoplasm. It catalyses the reaction N-acetyl-L-glutamate + ATP = N-acetyl-L-glutamyl 5-phosphate + ADP. Its pathway is amino-acid biosynthesis; L-arginine biosynthesis; N(2)-acetyl-L-ornithine from L-glutamate: step 2/4. Functionally, catalyzes the ATP-dependent phosphorylation of N-acetyl-L-glutamate. This Myxococcus xanthus (strain DK1622) protein is Acetylglutamate kinase.